Reading from the N-terminus, the 143-residue chain is Large-conductance mechanosensitive channel (143 aa).

Helical transmembrane passes span Phe-10–Gly-30, Ile-40–Ile-60, and Gly-86–Val-106.

It belongs to the MscL family. In terms of assembly, homopentamer.

It is found in the cell inner membrane. Channel that opens in response to stretch forces in the membrane lipid bilayer. May participate in the regulation of osmotic pressure changes within the cell. In Acinetobacter baumannii (strain ATCC 17978 / DSM 105126 / CIP 53.77 / LMG 1025 / NCDC KC755 / 5377), this protein is Large-conductance mechanosensitive channel.